We begin with the raw amino-acid sequence, 291 residues long: 4-hydroxy-tetrahydrodipicolinate synthase (291 aa).

T45 is a pyruvate binding site. The active-site Proton donor/acceptor is the Y133. The active-site Schiff-base intermediate with substrate is the K161. I203 serves as a coordination point for pyruvate.

It belongs to the DapA family. Homotetramer; dimer of dimers.

The protein resides in the cytoplasm. The catalysed reaction is L-aspartate 4-semialdehyde + pyruvate = (2S,4S)-4-hydroxy-2,3,4,5-tetrahydrodipicolinate + H2O + H(+). The protein operates within amino-acid biosynthesis; L-lysine biosynthesis via DAP pathway; (S)-tetrahydrodipicolinate from L-aspartate: step 3/4. Catalyzes the condensation of (S)-aspartate-beta-semialdehyde [(S)-ASA] and pyruvate to 4-hydroxy-tetrahydrodipicolinate (HTPA). This is 4-hydroxy-tetrahydrodipicolinate synthase from Laribacter hongkongensis (strain HLHK9).